We begin with the raw amino-acid sequence, 324 residues long: Probable uridine nucleosidase 1 (324 aa).

His248 is an active-site residue.

The protein belongs to the IUNH family.

It localises to the cytoplasm. It carries out the reaction uridine + H2O = D-ribose + uracil. Involved in pyrimidine breakdown. The protein is Probable uridine nucleosidase 1 (URH1) of Oryza sativa subsp. japonica (Rice).